We begin with the raw amino-acid sequence, 304 residues long: UDP-N-acetylenolpyruvoylglucosamine reductase (304 aa).

The FAD-binding PCMH-type domain occupies 33 to 198; it reads IGGPADLLVM…LEVVLALQEG (166 aa). Residue Arg177 is part of the active site. The Proton donor role is filled by Ser227. Glu297 is an active-site residue.

The protein belongs to the MurB family. It depends on FAD as a cofactor.

It is found in the cytoplasm. It carries out the reaction UDP-N-acetyl-alpha-D-muramate + NADP(+) = UDP-N-acetyl-3-O-(1-carboxyvinyl)-alpha-D-glucosamine + NADPH + H(+). The protein operates within cell wall biogenesis; peptidoglycan biosynthesis. Functionally, cell wall formation. This chain is UDP-N-acetylenolpyruvoylglucosamine reductase, found in Alkaliphilus metalliredigens (strain QYMF).